Consider the following 903-residue polypeptide: Protein translocase subunit SecA (903 aa).

ATP-binding positions include glutamine 87, 105–109, and aspartate 494; that span reads GEGKT. The tract at residues 861-883 is disordered; it reads SGSQGAAPRQPVRAEGKKVGRND. A compositionally biased stretch (basic and acidic residues) spans 872–881; sequence VRAEGKKVGR. Zn(2+)-binding residues include cysteine 885, cysteine 887, cysteine 896, and cysteine 897.

This sequence belongs to the SecA family. Monomer and homodimer. Part of the essential Sec protein translocation apparatus which comprises SecA, SecYEG and auxiliary proteins SecDF. Other proteins may also be involved. It depends on Zn(2+) as a cofactor.

It localises to the cell membrane. It is found in the cytoplasm. It catalyses the reaction ATP + H2O + cellular proteinSide 1 = ADP + phosphate + cellular proteinSide 2.. In terms of biological role, part of the Sec protein translocase complex. Interacts with the SecYEG preprotein conducting channel. Has a central role in coupling the hydrolysis of ATP to the transfer of proteins into and across the cell membrane, serving as an ATP-driven molecular motor driving the stepwise translocation of polypeptide chains across the membrane. This chain is Protein translocase subunit SecA, found in Symbiobacterium thermophilum (strain DSM 24528 / JCM 14929 / IAM 14863 / T).